The following is a 403-amino-acid chain: 4-hydroxy-3-methylbut-2-en-1-yl diphosphate synthase (flavodoxin) (403 aa).

Residues 1 to 16 are compositionally biased toward basic and acidic residues; sequence MNTENPIEKPFRKTGD. The interval 1-31 is disordered; sequence MNTENPIEKPFRKTGDPVDLTSESPLHPRRK. Residues Cys291, Cys294, Cys326, and Glu333 each coordinate [4Fe-4S] cluster.

The protein belongs to the IspG family. [4Fe-4S] cluster serves as cofactor.

The catalysed reaction is (2E)-4-hydroxy-3-methylbut-2-enyl diphosphate + oxidized [flavodoxin] + H2O + 2 H(+) = 2-C-methyl-D-erythritol 2,4-cyclic diphosphate + reduced [flavodoxin]. The protein operates within isoprenoid biosynthesis; isopentenyl diphosphate biosynthesis via DXP pathway; isopentenyl diphosphate from 1-deoxy-D-xylulose 5-phosphate: step 5/6. In terms of biological role, converts 2C-methyl-D-erythritol 2,4-cyclodiphosphate (ME-2,4cPP) into 1-hydroxy-2-methyl-2-(E)-butenyl 4-diphosphate. This chain is 4-hydroxy-3-methylbut-2-en-1-yl diphosphate synthase (flavodoxin), found in Bifidobacterium longum (strain NCC 2705).